The primary structure comprises 228 residues: Lipoprotein-releasing system ATP-binding protein LolD (228 aa).

The ABC transporter domain maps to Ile6 to Gln228. Gly42–Ser49 contacts ATP.

The protein belongs to the ABC transporter superfamily. Lipoprotein translocase (TC 3.A.1.125) family. As to quaternary structure, the complex is composed of two ATP-binding proteins (LolD) and two transmembrane proteins (LolC and LolE).

The protein resides in the cell inner membrane. Its function is as follows. Part of the ABC transporter complex LolCDE involved in the translocation of mature outer membrane-directed lipoproteins, from the inner membrane to the periplasmic chaperone, LolA. Responsible for the formation of the LolA-lipoprotein complex in an ATP-dependent manner. This is Lipoprotein-releasing system ATP-binding protein LolD from Saccharophagus degradans (strain 2-40 / ATCC 43961 / DSM 17024).